The primary structure comprises 421 residues: Imidazolonepropionase (421 aa).

Residues H81 and H83 each coordinate Fe(3+). Residues H81 and H83 each contribute to the Zn(2+) site. 4-imidazolone-5-propanoate is bound by residues R90, Y153, and H186. Y153 contacts N-formimidoyl-L-glutamate. H251 lines the Fe(3+) pocket. H251 contacts Zn(2+). E254 serves as a coordination point for 4-imidazolone-5-propanoate. D326 serves as a coordination point for Fe(3+). D326 is a binding site for Zn(2+). Residues N328 and G330 each contribute to the N-formimidoyl-L-glutamate site. Position 331 (S331) interacts with 4-imidazolone-5-propanoate.

It belongs to the metallo-dependent hydrolases superfamily. HutI family. Requires Zn(2+) as cofactor. Fe(3+) is required as a cofactor.

Its subcellular location is the cytoplasm. It catalyses the reaction 4-imidazolone-5-propanoate + H2O = N-formimidoyl-L-glutamate. The protein operates within amino-acid degradation; L-histidine degradation into L-glutamate; N-formimidoyl-L-glutamate from L-histidine: step 3/3. Catalyzes the hydrolytic cleavage of the carbon-nitrogen bond in imidazolone-5-propanoate to yield N-formimidoyl-L-glutamate. It is the third step in the universal histidine degradation pathway. The protein is Imidazolonepropionase of Streptococcus pyogenes serotype M3 (strain SSI-1).